The following is a 298-amino-acid chain: Acetylglutamate kinase (298 aa).

Substrate-binding positions include 66-67 (GG), Arg88, and Asn193.

This sequence belongs to the acetylglutamate kinase family. ArgB subfamily.

The protein resides in the cytoplasm. The enzyme catalyses N-acetyl-L-glutamate + ATP = N-acetyl-L-glutamyl 5-phosphate + ADP. It functions in the pathway amino-acid biosynthesis; L-arginine biosynthesis; N(2)-acetyl-L-ornithine from L-glutamate: step 2/4. Catalyzes the ATP-dependent phosphorylation of N-acetyl-L-glutamate. This is Acetylglutamate kinase from Methanosphaera stadtmanae (strain ATCC 43021 / DSM 3091 / JCM 11832 / MCB-3).